A 208-amino-acid chain; its full sequence is Small ribosomal subunit protein uS4 (208 aa).

An S4 RNA-binding domain is found at 98-159; the sequence is RRLDNVAYRL…KSRKVAAISE (62 aa).

It belongs to the universal ribosomal protein uS4 family. Part of the 30S ribosomal subunit. Contacts protein S5. The interaction surface between S4 and S5 is involved in control of translational fidelity.

Its function is as follows. One of the primary rRNA binding proteins, it binds directly to 16S rRNA where it nucleates assembly of the body of the 30S subunit. In terms of biological role, with S5 and S12 plays an important role in translational accuracy. The protein is Small ribosomal subunit protein uS4 of Citrifermentans bemidjiense (strain ATCC BAA-1014 / DSM 16622 / JCM 12645 / Bem) (Geobacter bemidjiensis).